We begin with the raw amino-acid sequence, 195 residues long: Heterogeneous nuclear ribonucleoprotein A/B (195 aa).

The tract at residues 1 to 23 is disordered; sequence EEVADGQAHGEXVYREEHHEGEK. The segment covering 12–23 has biased composition (basic and acidic residues); it reads XVYREEHHEGEK. The region spanning 32–48 is the RRM domain; sequence EETKLFVGALSWETTEK. 2 positions are modified to asymmetric dimethylarginine: arginine 119 and arginine 122. Serine 173 carries the post-translational modification Phosphoserine; by CK2.

Post-translationally, extensively phosphorylated on tyrosine residues.

It is found in the cytoplasm. The protein resides in the nucleus. Its function is as follows. May regulate mRNA translation and stability. It binds to poly(A) and poly(U) regions of RNA. This binding is inhibited when the protein is phosphorylated. The sequence is that of Heterogeneous nuclear ribonucleoprotein A/B from Artemia salina (Brine shrimp).